We begin with the raw amino-acid sequence, 423 residues long: Adenylosuccinate synthetase (423 aa).

GTP contacts are provided by residues 12–18 (GDEGKGK) and 40–42 (GHT). The active-site Proton acceptor is D13. Positions 13 and 40 each coordinate Mg(2+). IMP contacts are provided by residues 13–16 (DEGK), 38–41 (NAGH), T129, R143, Q221, T236, and R300. The active-site Proton donor is H41. 296 to 302 (SVTGRKR) is a binding site for substrate. GTP-binding positions include R302, 328–330 (KSD), and 408–410 (SVG).

Belongs to the adenylosuccinate synthetase family. Homodimer. It depends on Mg(2+) as a cofactor.

The protein localises to the cytoplasm. It catalyses the reaction IMP + L-aspartate + GTP = N(6)-(1,2-dicarboxyethyl)-AMP + GDP + phosphate + 2 H(+). The protein operates within purine metabolism; AMP biosynthesis via de novo pathway; AMP from IMP: step 1/2. Functionally, plays an important role in the de novo pathway of purine nucleotide biosynthesis. Catalyzes the first committed step in the biosynthesis of AMP from IMP. This is Adenylosuccinate synthetase from Bacteroides fragilis (strain ATCC 25285 / DSM 2151 / CCUG 4856 / JCM 11019 / LMG 10263 / NCTC 9343 / Onslow / VPI 2553 / EN-2).